Here is a 244-residue protein sequence, read N- to C-terminus: Small ribosomal subunit protein uS2 (244 aa).

The interval 224 to 244 (GQQGSDEAEEAEEAAEEVVAE) is disordered. Positions 229–244 (DEAEEAEEAAEEVVAE) are enriched in acidic residues.

Belongs to the universal ribosomal protein uS2 family.

This Desulfitobacterium hafniense (strain DSM 10664 / DCB-2) protein is Small ribosomal subunit protein uS2.